A 359-amino-acid chain; its full sequence is MTTTIQQRSGANGWQQFCDWVTSTNNRLYVGWFGVLMIPTLLAATTCFIVAFIAAPPVDIDGIREPVAGSLMYGNNIISGAVVPSSNAIGLHFYPIWEAASLDEWLYNGGPFQLVVFHFLIGIYAYMGREWELSYRLGMRPWICVAYSAPVAAASAVFLVYPFGQGSFSDAMPLGISGTFNYMLVFQAEHNILMHPFHMLGVAGVFGGSLFSAMHGSLVTSSLVRETTETESQNYGYKFGQEEETYNIVAAHGYFGRLIFQYASFNNSRSLHFFLAAWPVVGIWFTALGVSTMAFNLNGFNFNQSILDGQGRVLNTWADVLNRAGLGMEVMHERNAHNFPLDLAAAESTPVALQAPAIG.

Helical transmembrane passes span 29–46 (YVGW…AATT), 118–133 (HFLI…EWEL), and 142–156 (WICV…AASA). His118 serves as a coordination point for chlorophyll a. Pheophytin a is bound at residue Tyr126. [CaMn4O5] cluster contacts are provided by Asp170 and Glu189. A helical transmembrane segment spans residues 197–218 (FHMLGVAGVFGGSLFSAMHGSL). His198 provides a ligand contact to chlorophyll a. A quinone contacts are provided by residues His215 and 264-265 (SF). Fe cation is bound at residue His215. His272 provides a ligand contact to Fe cation. Residues 274–288 (FLAAWPVVGIWFTAL) traverse the membrane as a helical segment. Residues His332, Glu333, Asp342, and Ala344 each coordinate [CaMn4O5] cluster. The propeptide occupies 345–359 (AAESTPVALQAPAIG).

This sequence belongs to the reaction center PufL/M/PsbA/D family. In terms of assembly, PSII is composed of 1 copy each of membrane proteins PsbA, PsbB, PsbC, PsbD, PsbE, PsbF, PsbH, PsbI, PsbJ, PsbK, PsbL, PsbM, PsbT, PsbX, PsbY, PsbZ, Psb30/Ycf12, peripheral proteins PsbO, CyanoQ (PsbQ), PsbU, PsbV and a large number of cofactors. It forms dimeric complexes. It depends on The D1/D2 heterodimer binds P680, chlorophylls that are the primary electron donor of PSII, and subsequent electron acceptors. It shares a non-heme iron and each subunit binds pheophytin, quinone, additional chlorophylls, carotenoids and lipids. D1 provides most of the ligands for the Mn4-Ca-O5 cluster of the oxygen-evolving complex (OEC). There is also a Cl(-1) ion associated with D1 and D2, which is required for oxygen evolution. The PSII complex binds additional chlorophylls, carotenoids and specific lipids. as a cofactor. Post-translationally, tyr-161 forms a radical intermediate that is referred to as redox-active TyrZ, YZ or Y-Z. C-terminally processed by CtpA; processing is essential to allow assembly of the oxygen-evolving complex and thus photosynthetic growth.

The protein resides in the cellular thylakoid membrane. It carries out the reaction 2 a plastoquinone + 4 hnu + 2 H2O = 2 a plastoquinol + O2. Functionally, photosystem II (PSII) is a light-driven water:plastoquinone oxidoreductase that uses light energy to abstract electrons from H(2)O, generating O(2) and a proton gradient subsequently used for ATP formation. It consists of a core antenna complex that captures photons, and an electron transfer chain that converts photonic excitation into a charge separation. The D1/D2 (PsbA/PsbD) reaction center heterodimer binds P680, the primary electron donor of PSII as well as several subsequent electron acceptors. This is Photosystem II protein D1 2 from Synechococcus sp. (strain CC9311).